The sequence spans 172 residues: R-phycocyanin beta subunit (172 aa).

An N4-methylasparagine modification is found at asparagine 72. Cysteine 82 contributes to the (2R,3E)-phycocyanobilin binding site. Residue cysteine 153 participates in (2R,3E)-phycoerythrobilin binding.

The protein belongs to the phycobiliprotein family. As to quaternary structure, heterodimer of an alpha and a beta subunit, which further assembles into trimers and the trimers into hexamers. Contains two covalently linked bilin chromophores.

The protein localises to the cellular thylakoid membrane. Light-harvesting photosynthetic bile pigment-protein from the phycobiliprotein complex (phycobilisome, PBS). Phycocyanin is the major phycobiliprotein in the PBS rod. The sequence is that of R-phycocyanin beta subunit (rpcB) from Synechococcus sp. (strain WH7803).